Here is a 305-residue protein sequence, read N- to C-terminus: Glycine--tRNA ligase alpha subunit (305 aa).

This sequence belongs to the class-II aminoacyl-tRNA synthetase family. Tetramer of two alpha and two beta subunits.

Its subcellular location is the cytoplasm. It catalyses the reaction tRNA(Gly) + glycine + ATP = glycyl-tRNA(Gly) + AMP + diphosphate. This chain is Glycine--tRNA ligase alpha subunit, found in Streptococcus pneumoniae (strain P1031).